The primary structure comprises 215 residues: Large ribosomal subunit protein uL4 (215 aa).

Residues 43-97 (RRQGTHSTKTRAEVSGGGKKPWRQKGTGRARAGSTRSPIWVGGGKTHTPKPRDYS) are disordered.

The protein belongs to the universal ribosomal protein uL4 family. As to quaternary structure, part of the 50S ribosomal subunit.

Its function is as follows. One of the primary rRNA binding proteins, this protein initially binds near the 5'-end of the 23S rRNA. It is important during the early stages of 50S assembly. It makes multiple contacts with different domains of the 23S rRNA in the assembled 50S subunit and ribosome. Forms part of the polypeptide exit tunnel. The polypeptide is Large ribosomal subunit protein uL4 (Brachyspira pilosicoli (Serpulina pilosicoli)).